The chain runs to 198 residues: Glycerol-3-phosphate acyltransferase (198 aa).

5 helical membrane-spanning segments follow: residues 6–26 (FLPVALIIGYLFGSIPFGLIL), 55–75 (GLAAGTLLGDALKGTAAVIIS), 83–103 (AAMIAGLGAFLGHLFPVWLKF), 113–133 (IGILIGLFWPGAIFFCLVWLA), and 154–174 (IVLWAFGHTALAALFALLTLL).

The protein belongs to the PlsY family. As to quaternary structure, probably interacts with PlsX.

Its subcellular location is the cell inner membrane. The enzyme catalyses an acyl phosphate + sn-glycerol 3-phosphate = a 1-acyl-sn-glycero-3-phosphate + phosphate. Its pathway is lipid metabolism; phospholipid metabolism. Catalyzes the transfer of an acyl group from acyl-phosphate (acyl-PO(4)) to glycerol-3-phosphate (G3P) to form lysophosphatidic acid (LPA). This enzyme utilizes acyl-phosphate as fatty acyl donor, but not acyl-CoA or acyl-ACP. The chain is Glycerol-3-phosphate acyltransferase from Bradyrhizobium sp. (strain BTAi1 / ATCC BAA-1182).